Reading from the N-terminus, the 811-residue chain is Beta-catenin homolog sys-1 (811 aa).

Residues 1–105 (MHSTGEPQRG…SRGPAAPAQN (105 aa)) are disordered. Positions 64-103 (QQQQMTPQALSTQQQQQVQQQQQRQLYSSPSPSRGPAAPA) are enriched in low complexity.

Interacts with TCF transcription factor pop-1 (via N-terminal region); interaction is direct.

Its subcellular location is the nucleus. It is found in the cytoplasm. The protein resides in the cytoplasmic granule. It localises to the cytoskeleton. The protein localises to the microtubule organizing center. Its subcellular location is the centrosome. It is found in the chromosome. The protein resides in the centromere. It localises to the kinetochore. Transcription coregulator. Part of the Wnt signaling asymmetry pathway, probably acting downstream of putative frizzled ligand mom-2, Wnt/frizzled receptors lin-17 and mom-5, and dishevelled homolog dsh-2. Activates or represses target gene expression, depending on upstream Wnt signals and interactions with transcription factors, such as pop-1. Required for the activation of Wnt-responsive genes in the E blastomere; thereby leading to a role in endoderm specification and gut development. Reciprocal distribution patterns of sys-1 and pop-1/TCF in the daughters of anterior-posterior cell divisions functions in specifying cell fate; a higher sys-1 to pop-1 ratio promotes the posterior cell fate, whereas a low sys-1 to pop-1 ratio promotes the anterior fate. Represses expression of homeobox ttx-3 in neuroblasts of the SIAD/SIBV lineage, perhaps acting by blocking its transcriptional activation by a complex consisting of ref-2 and pop-1. Required for early organization of the hermaphrodite, but not the male, gonad; involved in generation of regulatory cells, known as the distal tip cells (DTC), and in formation of the somatic gonadal primordium. Involved in regulating asymmetric divisions of the somatic gonadal precursor cells (SGP), Z1 and Z4. This chain is Beta-catenin homolog sys-1, found in Caenorhabditis elegans.